A 267-amino-acid polypeptide reads, in one-letter code: Soluble interferon gamma receptor OPG193 (267 aa).

The first 17 residues, 1 to 17 (MRYIIILAVLFINSIHA), serve as a signal peptide directing secretion. Asn-42 and Asn-150 each carry an N-linked (GlcNAc...) asparagine; by host glycan.

This sequence belongs to the type II cytokine receptor family. In terms of assembly, homodimer. Interacts with host IFNG.

Its subcellular location is the secreted. Counteracts the antiviral effects of host IFN-gamma. Acts as a soluble IFN-gamma receptor and thus inhibits the interaction between host IFN-gamma and its receptor. In Cynomys gunnisoni (Gunnison's prairie dog), this protein is Soluble interferon gamma receptor OPG193 (OPG193).